Consider the following 210-residue polypeptide: Synaptosomal-associated protein 23 (210 aa).

Met1 is subject to N-acetylmethionine. 4 positions are modified to phosphoserine: Ser5, Ser20, Ser23, and Ser34. In terms of domain architecture, t-SNARE coiled-coil homology 1 spans 14 to 76 (HQVTDESLES…REAEKTLTEL (63 aa)). The stretch at 23-76 (STRRILGLAIESQDAGIKTITMLDEQGEQLNRIEEGMDQINKDMREAEKTLTEL) forms a coiled coil. Residues Cys79, Cys80, Cys83, Cys85, and Cys87 are each lipidated (S-palmitoyl cysteine). The disordered stretch occupies residues 104 to 135 (GDGGDNSPSNVVSKQPSRITNGQPQQTTGAAS). Positions 109–133 (NSPSNVVSKQPSRITNGQPQQTTGA) are enriched in polar residues. 2 positions are modified to phosphoserine: Ser110 and Ser160. In terms of domain architecture, t-SNARE coiled-coil homology 2 spans 145-207 (DAREDEMEEN…DIANTRAKKL (63 aa)).

This sequence belongs to the SNAP-25 family. Homotetramer (via coiled-coil domain), also forms heterotetramers with STX4 and VAMP3. Found in a complex with VAMP8 and STX1A. Found in a complex with VAMP8 and STX4 in pancreas. Interacts simultaneously with SNAPIN and SYN4. Interacts with STX1A. Interacts with STX12. Interacts tightly to multiple syntaxins and synaptobrevins/VAMPs. Interacts with ZDHHC13 (via ANK repeats). Interacts with ZDHHC17 (via ANK repeats). (Microbial infection) Targeted and hydrolyzed by C.botulinum neurotoxin type A (BoNT/A, botA) which hydrolyzes the 202-Thr-|-Arg-203 bond; the in vitro reaction is not highly efficient. Post-translationally, (Microbial infection) Targeted and hydrolyzed by C.botulinum neurotoxin type E (BoNT/E) which hydrolyzes the 185-Arg-|-Ile-186 bond; the in vitro reaction is more efficient than that of BoNT/A. In terms of tissue distribution, expressed in non-neuronal tissues.

Its subcellular location is the cell membrane. The protein localises to the synapse. It localises to the synaptosome. Its function is as follows. Essential component of the high affinity receptor for the general membrane fusion machinery and an important regulator of transport vesicle docking and fusion. The sequence is that of Synaptosomal-associated protein 23 (Snap23) from Mus musculus (Mouse).